The primary structure comprises 653 residues: Dystrotelin (653 aa).

Residues 223-279 (THPVRCSVCRTFPIIGLRYHCLKCLDFDICELCFLSGLHKNSHEKSHTVMEECVQMS) form a ZZ-type zinc finger. Positions 228, 231, 243, 246, 252, 255, 265, and 269 each coordinate Zn(2+). The stretch at 384–411 (RDSLNTLLRERRLLRKQLHRYKQKLQGT) forms a coiled coil.

As to expression, strongly expressed in the nervous and muscular tissues.

Its subcellular location is the cell membrane. This is Dystrotelin (Dytn) from Mus musculus (Mouse).